A 211-amino-acid polypeptide reads, in one-letter code: Uridine kinase (211 aa).

12-19 contacts ATP; the sequence is GGSGSGKT.

This sequence belongs to the uridine kinase family.

Its subcellular location is the cytoplasm. It catalyses the reaction uridine + ATP = UMP + ADP + H(+). The catalysed reaction is cytidine + ATP = CMP + ADP + H(+). The protein operates within pyrimidine metabolism; CTP biosynthesis via salvage pathway; CTP from cytidine: step 1/3. It functions in the pathway pyrimidine metabolism; UMP biosynthesis via salvage pathway; UMP from uridine: step 1/1. The chain is Uridine kinase from Anoxybacillus flavithermus (strain DSM 21510 / WK1).